The sequence spans 352 residues: Molybdenum import ATP-binding protein ModC (352 aa).

In terms of domain architecture, ABC transporter spans 2 to 230; the sequence is MLEINVKKRL…PLFEPWQEQG (229 aa). 32-39 contacts ATP; it reads GISGSGKS. A Mop domain is found at 290 to 352; it reads KTSIRNILSG…YAQIKAVSVM (63 aa).

This sequence belongs to the ABC transporter superfamily. Molybdate importer (TC 3.A.1.8) family. In terms of assembly, the complex is composed of two ATP-binding proteins (ModC), two transmembrane proteins (ModB) and a solute-binding protein (ModA).

It is found in the cell inner membrane. The catalysed reaction is molybdate(out) + ATP + H2O = molybdate(in) + ADP + phosphate + H(+). In terms of biological role, part of the ABC transporter complex ModABC involved in molybdenum import. Responsible for energy coupling to the transport system. This is Molybdenum import ATP-binding protein ModC from Mannheimia succiniciproducens (strain KCTC 0769BP / MBEL55E).